A 355-amino-acid polypeptide reads, in one-letter code: Peptide chain release factor 1 (355 aa).

Residue glutamine 231 is modified to N5-methylglutamine. The interval 283 to 303 (LAKESEARKSQVGSGDRSERI) is disordered.

This sequence belongs to the prokaryotic/mitochondrial release factor family. Post-translationally, methylated by PrmC. Methylation increases the termination efficiency of RF1.

It is found in the cytoplasm. In terms of biological role, peptide chain release factor 1 directs the termination of translation in response to the peptide chain termination codons UAG and UAA. In Campylobacter lari (strain RM2100 / D67 / ATCC BAA-1060), this protein is Peptide chain release factor 1.